Consider the following 623-residue polypeptide: MTEEDSSAKMSEDVEKYLNLNPPCSSSSSSSSAATFTNKSRNFKSSPPPCPDHVLENVLENVLQFLTSRCDRNAVSLVCRSWYRVEAQTRLEVFIGNCYSLSPARLIHRFKRVRSLVLKGKPRFADFNLMPPNWGAQFSPWVAATAKAYPWLEKVHLKRMFVTDDDLALLAESFPGFKELTLVCCEGFGTSGIAIVANKCRQLKVLDLMESEVTDDELDWISCFPEGETHLESLSFDCVESPINFKALEELVVRSPFLKKLRTNRFVSLEELHRLMVRAPQLTSLGTGSFSPDNVPQGEQQPDYAAAFRACKSIVCLSGFREFRPEYLLAISSVCANLTSLNFSYANISPHMLKPIISNCHNIRVFWALDSIRDEGLQAVAATCKELRELRIFPFDPREDSEGPVSGVGLQAISEGCRKLESILYFCQNMTNGAVTAMSENCPQLTVFRLCIMGRHRPDHVTGKPMDDGFGAIVKNCKKLTRLAVSGLLTDEAFSYIGEYGKLIRTLSVAFAGNSDKALRYVLEGCPKLQKLEIRDSPFGDVGLRSGMHRYSNMRFVWLSSCLISRGGCRGVSHALPNVVVEVFGADGDDDEDTVTGDYVETLYLYRSLDGPRKDAPKFVTIL.

Residues 18 to 48 are disordered; the sequence is LNLNPPCSSSSSSSSAATFTNKSRNFKSSPP. The segment covering 33 to 45 has biased composition (polar residues); the sequence is AATFTNKSRNFKS. In terms of domain architecture, F-box spans 54–97; that stretch reads VLENVLENVLQFLTSRCDRNAVSLVCRSWYRVEAQTRLEVFIGN. A 1D-myo-inositol hexakisphosphate-binding site is contributed by Lys119. The interval 126-127 is interaction with auxin-responsive proteins; sequence DF. Residues 158 to 159 and Arg391 each bind 1D-myo-inositol hexakisphosphate; that span reads KR. The segment at 394-399 is interaction with auxin-responsive proteins; that stretch reads PFDPRE. 447–449 provides a ligand contact to 1D-myo-inositol hexakisphosphate; that stretch reads VFR. The interval 451 to 455 is interaction with auxin-responsive proteins; it reads CIMGR. Arg482 contributes to the 1D-myo-inositol hexakisphosphate binding site. An interaction with auxin-responsive proteins region spans residues 510-511; the sequence is AF. Residues 530 to 531 and Arg555 contribute to the 1D-myo-inositol hexakisphosphate site; that span reads QK.

In terms of assembly, part of a SCF (SKP1-cullin-F-box) protein ligase complex. May interact with auxin and auxin-responsive proteins.

The protein resides in the nucleus. Its pathway is protein modification; protein ubiquitination. This is F-box protein FBX14 (FBX14) from Arabidopsis thaliana (Mouse-ear cress).